The following is a 152-amino-acid chain: Dimethylsulfoniopropionate lyase DddW (152 aa).

The region spanning Ile69–Val124 is the Cupin type-2 domain. Residues His83, Glu87, Tyr89, and His121 each coordinate Fe cation.

This sequence belongs to the non-heme iron-dependent dioxygenase family. Homodimer. It depends on Fe(2+) as a cofactor.

It carries out the reaction S,S-dimethyl-beta-propiothetin = acrylate + dimethyl sulfide + H(+). Functionally, able to cleave dimethylsulfoniopropionate (DMSP), releasing dimethyl sulfide (DMS) and acrylate. DMS is the principal form by which sulfur is transported from oceans to the atmosphere. In Ruegeria pomeroyi (strain ATCC 700808 / DSM 15171 / DSS-3) (Silicibacter pomeroyi), this protein is Dimethylsulfoniopropionate lyase DddW.